A 101-amino-acid chain; its full sequence is Protein S100-A7 (101 aa).

Serine 2 is modified (N-acetylserine). EF-hand domains lie at 13-48 and 50-85; these read MIDM…SACD and KGTN…IATD. Histidine 18 and aspartate 25 together coordinate Zn(2+). Cysteine 47 and cysteine 96 are disulfide-bonded. Positions 63, 65, 67, 69, and 74 each coordinate Ca(2+). Residues histidine 87 and histidine 91 each coordinate Zn(2+).

As to quaternary structure, interacts with RANBP9. In terms of tissue distribution, fetal ear, skin, and tongue and human cell lines. Highly up-regulated in psoriatic epidermis. Also highly expressed in the urine of bladder squamous cell carcinoma (SCC) bearing patients.

It is found in the cytoplasm. The protein localises to the secreted. The polypeptide is Protein S100-A7 (S100A7) (Homo sapiens (Human)).